Consider the following 260-residue polypeptide: Indole-3-glycerol phosphate synthase (260 aa).

It belongs to the TrpC family.

The enzyme catalyses 1-(2-carboxyphenylamino)-1-deoxy-D-ribulose 5-phosphate + H(+) = (1S,2R)-1-C-(indol-3-yl)glycerol 3-phosphate + CO2 + H2O. It functions in the pathway amino-acid biosynthesis; L-tryptophan biosynthesis; L-tryptophan from chorismate: step 4/5. The chain is Indole-3-glycerol phosphate synthase from Desulfotalea psychrophila (strain LSv54 / DSM 12343).